The following is a 216-amino-acid chain: GTP cyclohydrolase 1 (216 aa).

Positions 108, 111, and 179 each coordinate Zn(2+).

The protein belongs to the GTP cyclohydrolase I family. As to quaternary structure, homomer.

The enzyme catalyses GTP + H2O = 7,8-dihydroneopterin 3'-triphosphate + formate + H(+). The protein operates within cofactor biosynthesis; 7,8-dihydroneopterin triphosphate biosynthesis; 7,8-dihydroneopterin triphosphate from GTP: step 1/1. The chain is GTP cyclohydrolase 1 from Shewanella baltica (strain OS223).